The chain runs to 1131 residues: Phytochrome A (1131 aa).

The disordered stretch occupies residues 1-23; that stretch reads MSSSRPAHSSSSSSRTRQSSRAR. Residues 219–404 enclose the GAF domain; sequence SMEALCNTVV…VFAVHVNKEF (186 aa). Position 324 (C324) interacts with phytochromobilin. 2 consecutive PAS domains span residues 620-690 and 750-834; these read VTSE…LQGR and VEGD…LAGE. One can recognise a Histidine kinase domain in the interval 904 to 1124; that stretch reads YMRHAINKPL…TFILTAELAA (221 aa).

This sequence belongs to the phytochrome family. In terms of assembly, homodimer. Contains one covalently linked phytochromobilin chromophore.

Functionally, regulatory photoreceptor which exists in two forms that are reversibly interconvertible by light: the Pr form that absorbs maximally in the red region of the spectrum and the Pfr form that absorbs maximally in the far-red region. Photoconversion of Pr to Pfr induces an array of morphogenic responses, whereas reconversion of Pfr to Pr cancels the induction of those responses. Pfr controls the expression of a number of nuclear genes including those encoding the small subunit of ribulose-bisphosphate carboxylase, chlorophyll A/B binding protein, protochlorophyllide reductase, rRNA, etc. It also controls the expression of its own gene(s) in a negative feedback fashion. The protein is Phytochrome A (PHYA1) of Zea mays (Maize).